The chain runs to 178 residues: Putative magnesium-dependent phosphatase YER134C (178 aa).

The Nucleophile role is filled by Asp11. A Mg(2+)-binding site is contributed by Asp11. Leu12, Asp13, Ser74, and Arg75 together coordinate phosphate. Asp13 is a binding site for Mg(2+). Asp13 (proton donor) is an active-site residue. Residue Arg75 participates in substrate binding. Position 141 (Asp141) interacts with Mg(2+).

The protein belongs to the HAD-like hydrolase superfamily.

The protein resides in the cytoplasm. It localises to the nucleus. The catalysed reaction is O-phospho-L-tyrosyl-[protein] + H2O = L-tyrosyl-[protein] + phosphate. Functionally, magnesium-dependent phosphatase which may act as a tyrosine phosphatase. The chain is Putative magnesium-dependent phosphatase YER134C from Saccharomyces cerevisiae (strain ATCC 204508 / S288c) (Baker's yeast).